The sequence spans 245 residues: Probable proteasome subunit alpha type-2 (245 aa).

The protein belongs to the peptidase T1A family. As to quaternary structure, the 26S proteasome consists of a 20S proteasome core and two 19S regulatory subunits. The 20S proteasome core is composed of 28 subunits that are arranged in four stacked rings, resulting in a barrel-shaped structure. The two end rings are each formed by seven alpha subunits, and the two central rings are each formed by seven beta subunits. The catalytic chamber with the active sites is on the inside of the barrel.

It localises to the cytoplasm. The protein localises to the nucleus. The proteasome is a multicatalytic proteinase complex which is characterized by its ability to cleave peptides with Arg, Phe, Tyr, Leu, and Glu adjacent to the leaving group at neutral or slightly basic pH. The proteasome has an ATP-dependent proteolytic activity. The protein is Probable proteasome subunit alpha type-2 (pre8) of Schizosaccharomyces pombe (strain 972 / ATCC 24843) (Fission yeast).